Consider the following 224-residue polypeptide: Envelope glycoprotein L (224 aa).

A signal peptide spans 1–19 (MGILGWVGLIAVGVLCVRG). The interval 20–161 (GLPSTEYVIR…FDYSRTRRCV (142 aa)) is interaction with gH. In terms of domain architecture, gL alphaherpesvirus-type spans 23-201 (STEYVIRSRV…LTTPPPIIAT (179 aa)). Cystine bridges form between cysteine 44/cysteine 76 and cysteine 149/cysteine 160. Residues 161 to 224 (VGRQDLGPTN…RRRRPHSRRL (64 aa)) form a disordered region. Residues 213–224 (KSRRRRPHSRRL) show a composition bias toward basic residues.

Belongs to the herpesviridae glycoprotein L (gL) family. Alphaherpesvirinae gL subfamily. In terms of assembly, interacts with glycoprotein H (gH); this interaction is necessary for the correct processing and cell surface expression of gH. The heterodimer gH/gL seems to interact with gB trimers during fusion.

It localises to the virion membrane. The protein resides in the host cell membrane. It is found in the host Golgi apparatus. The protein localises to the host trans-Golgi network. In terms of biological role, the heterodimer glycoprotein H-glycoprotein L is required for the fusion of viral and plasma membranes leading to virus entry into the host cell. Acts as a functional inhibitor of gH and maintains gH in an inhibited form. Upon binding to host integrins, gL dissociates from gH leading to activation of the viral fusion glycoproteins gB and gH. The protein is Envelope glycoprotein L of Human herpesvirus 1 (strain 17) (HHV-1).